A 208-amino-acid chain; its full sequence is Small ribosomal subunit protein uS4 (208 aa).

Positions 30–49 (KSALEKRPYPPGQHGQRRSK) are disordered. Residues 98-161 (RRLDNVVYRM…KNNPQIQRSL (64 aa)) form the S4 RNA-binding domain.

This sequence belongs to the universal ribosomal protein uS4 family. In terms of assembly, part of the 30S ribosomal subunit. Contacts protein S5. The interaction surface between S4 and S5 is involved in control of translational fidelity.

In terms of biological role, one of the primary rRNA binding proteins, it binds directly to 16S rRNA where it nucleates assembly of the body of the 30S subunit. Its function is as follows. With S5 and S12 plays an important role in translational accuracy. The chain is Small ribosomal subunit protein uS4 from Nitratiruptor sp. (strain SB155-2).